Consider the following 584-residue polypeptide: MAVDTETTTTTIPVTDSDRIDDQNNLTSNAIPHASEKTVPDSPASEQNEVSDESEDKPSKTKKSFGFYAIIVALALTSLLTSLEATITSTALPTITSELGGASLYVWVVNGYYLTQTAFQPFVGQMADIYGRRWPMICSAAMFTIGSGVAGGSKNIQTLIAGRLLQGIGSGGILVLTEIIICDLLPLRERGKYLGMIVSLVGIGAALGPLFGGLIVQYSSWPWVFYLNVPIGGVACLMLFFFLRVRSDKTPNYMQRLRRFDWIGNVLFVMSMVSILIALSWAGTEYPWSSFRVVVPLVLGFVGSAAFVVYEGSSFCVNPTMPLHIFSNRTSGTAFAVTFLHTLSSVSVMYFLPVYFQAVLNASPSRSGVQLLPTILFMIPGAIAGGTLLSKFGRYRPLQHGGLAFMIIGFGLLTLLDADSNTGEWVGYQLLGALGTGLALPVLLPAVQAPLTEEDTALCTATWSFMRTYGFIWGATIATAVFNNRFDVLAPRITDTTIGSQLTNGRAYELATKVFMNSIKDPVTQREVKSVYVDALNVVWYVSLAFAGLGFLLVFLEKEITLRKELDTKYAMEEKKKKPENSEA.

Low complexity predominate over residues 1 to 11; sequence MAVDTETTTTT. The interval 1-60 is disordered; it reads MAVDTETTTTTIPVTDSDRIDDQNNLTSNAIPHASEKTVPDSPASEQNEVSDESEDKPSK. Residue Asn25 is glycosylated (N-linked (GlcNAc...) asparagine). 8 consecutive transmembrane segments (helical) span residues 65-85, 99-119, 134-154, 167-187, 196-216, 223-243, 262-282, and 293-313; these read FGFY…SLEA, LGGA…QTAF, WPMI…GGSK, GIGS…LLPL, MIVS…GLIV, WVFY…FFFL, WIGN…LSWA, and VVVP…YEGS. N-linked (GlcNAc...) asparagine glycosylation occurs at Asn328. 6 helical membrane-spanning segments follow: residues 334 to 354, 369 to 389, 398 to 418, 425 to 445, 462 to 482, and 536 to 556; these read AFAV…FLPV, VQLL…GTLL, LQHG…LLDA, WVGY…VLLP, TWSF…TAVF, and LNVV…LVFL.

This sequence belongs to the major facilitator superfamily.

It localises to the membrane. In terms of biological role, MFS-type transporter; part of the gene cluster that mediates the biosynthesis of GKK1032, fungal natural products containing a macrocyclic para-cyclophane connected to a decahydrofluorene ring system that show potent antitumor activities. This chain is MFS-type transporter gkaD, found in Penicillium citrinum.